The sequence spans 217 residues: L-lactate dehydrogenase B chain (217 aa).

Asparagine 22 contributes to the NAD(+) binding site. Substrate-binding residues include asparagine 22 and arginine 53. The active-site Proton acceptor is histidine 77. A Phosphotyrosine modification is found at tyrosine 123. Threonine 132 contacts substrate. Lysine 212 carries the post-translational modification N6-acetyllysine.

This sequence belongs to the LDH/MDH superfamily. LDH family. Homotetramer. Interacts with PTEN upstream reading frame protein MP31; the interaction leads to inhibition of mitochondrial lactate dehydrogenase activity, preventing conversion of lactate to pyruvate in mitochondria.

It localises to the cytoplasm. The protein resides in the mitochondrion inner membrane. The enzyme catalyses (S)-lactate + NAD(+) = pyruvate + NADH + H(+). It functions in the pathway fermentation; pyruvate fermentation to lactate; (S)-lactate from pyruvate: step 1/1. In terms of biological role, interconverts simultaneously and stereospecifically pyruvate and lactate with concomitant interconversion of NADH and NAD(+). This chain is L-lactate dehydrogenase B chain (LDHB), found in Oryctolagus cuniculus (Rabbit).